Reading from the N-terminus, the 151-residue chain is Lipoprotein signal peptidase (151 aa).

The next 3 membrane-spanning stretches (helical) occupy residues 33–53 (VIPD…FGLL), 58–78 (WIFI…QFKI), and 87–107 (LTLG…LFIG). Active-site residues include Asp-111 and Asp-126. The chain crosses the membrane as a helical span at residues 120–140 (FVFNFADSAIVVGVGLLMILM).

This sequence belongs to the peptidase A8 family.

The protein localises to the cell membrane. It carries out the reaction Release of signal peptides from bacterial membrane prolipoproteins. Hydrolyzes -Xaa-Yaa-Zaa-|-(S,diacylglyceryl)Cys-, in which Xaa is hydrophobic (preferably Leu), and Yaa (Ala or Ser) and Zaa (Gly or Ala) have small, neutral side chains.. The protein operates within protein modification; lipoprotein biosynthesis (signal peptide cleavage). This protein specifically catalyzes the removal of signal peptides from prolipoproteins. This Desulfitobacterium hafniense (strain DSM 10664 / DCB-2) protein is Lipoprotein signal peptidase.